Consider the following 351-residue polypeptide: UDP-N-acetylenolpyruvoylglucosamine reductase (351 aa).

Positions histidine 25–leucine 196 constitute an FAD-binding PCMH-type domain. Residue arginine 173 is part of the active site. Serine 246 functions as the Proton donor in the catalytic mechanism. The active site involves glutamate 343.

This sequence belongs to the MurB family. The cofactor is FAD.

It localises to the cytoplasm. It catalyses the reaction UDP-N-acetyl-alpha-D-muramate + NADP(+) = UDP-N-acetyl-3-O-(1-carboxyvinyl)-alpha-D-glucosamine + NADPH + H(+). It participates in cell wall biogenesis; peptidoglycan biosynthesis. Cell wall formation. This Xylella fastidiosa (strain 9a5c) protein is UDP-N-acetylenolpyruvoylglucosamine reductase.